Here is a 698-residue protein sequence, read N- to C-terminus: SHC SH2 domain-binding protein 1 homolog B (698 aa).

PbH1 repeat units follow at residues Cys480–Pro502, Gly503–Asp524, and Ile532–Lys554.

The protein localises to the midbody. Its subcellular location is the cytoplasm. The protein resides in the cytoskeleton. It localises to the spindle. May play a role in signaling pathways governing cellular proliferation. This Xenopus laevis (African clawed frog) protein is SHC SH2 domain-binding protein 1 homolog B (shcbp1-b).